Here is a 631-residue protein sequence, read N- to C-terminus: Dolichyl-diphosphooligosaccharide--protein glycosyltransferase subunit 2 (631 aa).

Positions 1–22 (MAPPGSSAVFLLALTITASTQA) are cleaved as a signal peptide. The Lumenal portion of the chain corresponds to 23-540 (LTPTHYLTKH…REPEKRPPTV (518 aa)). N-linked (GlcNAc...) asparagine glycosylation occurs at Asn106. A Glycyl lysine isopeptide (Lys-Gly) (interchain with G-Cter in ubiquitin) cross-link involves residue Lys154. The chain crosses the membrane as a helical span at residues 541–561 (VSNTFTALILSPLLLLFALWI). Residues 562 to 571 (RIGANVSNFT) lie on the Cytoplasmic side of the membrane. The chain crosses the membrane as a helical span at residues 572 to 592 (FAPSTVIFHLGHAAMLGLMYV). Residues 593–596 (YWTQ) lie on the Lumenal side of the membrane. Residues 597–617 (LNMFQTLKYLAVLGTVTFLAG) traverse the membrane as a helical segment. The Cytoplasmic portion of the chain corresponds to 618-631 (NRMLAQQAVKRTAH).

Belongs to the SWP1 family. Component of the oligosaccharyltransferase (OST) complex. OST exists in two different complex forms which contain common core subunits RPN1, RPN2, OST48, OST4, DAD1 and TMEM258, either STT3A or STT3B as catalytic subunits, and form-specific accessory subunits. STT3A complex assembly occurs through the formation of 3 subcomplexes. Subcomplex 1 contains RPN1 and TMEM258, subcomplex 2 contains the STT3A-specific subunits STT3A, DC2/OSTC, and KCP2 as well as the core subunit OST4, and subcomplex 3 contains RPN2, DAD1, and OST48. The STT3A complex can form stable complexes with the Sec61 complex or with both the Sec61 and TRAP complexes. Interacts with DDI2. Interacts with TMEM35A/NACHO.

The protein localises to the endoplasmic reticulum. The protein resides in the endoplasmic reticulum membrane. It functions in the pathway protein modification; protein glycosylation. In terms of biological role, subunit of the oligosaccharyl transferase (OST) complex that catalyzes the initial transfer of a defined glycan (Glc(3)Man(9)GlcNAc(2) in eukaryotes) from the lipid carrier dolichol-pyrophosphate to an asparagine residue within an Asn-X-Ser/Thr consensus motif in nascent polypeptide chains, the first step in protein N-glycosylation. N-glycosylation occurs cotranslationally and the complex associates with the Sec61 complex at the channel-forming translocon complex that mediates protein translocation across the endoplasmic reticulum (ER). All subunits are required for a maximal enzyme activity. The protein is Dolichyl-diphosphooligosaccharide--protein glycosyltransferase subunit 2 of Rattus norvegicus (Rat).